Reading from the N-terminus, the 395-residue chain is Cystathionine beta-lyase MetC (395 aa).

At Lys210 the chain carries N6-(pyridoxal phosphate)lysine.

This sequence belongs to the trans-sulfuration enzymes family. As to quaternary structure, homotetramer; dimer of dimers. The cofactor is pyridoxal 5'-phosphate.

It localises to the cytoplasm. The enzyme catalyses L,L-cystathionine + H2O = L-homocysteine + pyruvate + NH4(+). The catalysed reaction is L-cysteine + H2O = hydrogen sulfide + pyruvate + NH4(+) + H(+). It carries out the reaction an S-substituted L-cysteine + H2O = a thiol + pyruvate + NH4(+). It participates in amino-acid biosynthesis; L-methionine biosynthesis via de novo pathway; L-homocysteine from L-cystathionine: step 1/1. With respect to regulation, L-cysteine inhibits cystathionine beta-lyase activity competitively. Inhibited by aminoethoxyvinylglycine (AVG). Its function is as follows. Primarily catalyzes the cleavage of cystathionine to homocysteine, pyruvate and ammonia during methionine biosynthesis. Also exhibits cysteine desulfhydrase activity, producing sulfide from cysteine. In addition, under certain growth conditions, exhibits significant alanine racemase coactivity. This chain is Cystathionine beta-lyase MetC, found in Escherichia coli (strain K12).